A 465-amino-acid chain; its full sequence is ATP synthase subunit beta (465 aa).

148–155 serves as a coordination point for ATP; the sequence is GGAGVGKT.

Belongs to the ATPase alpha/beta chains family. As to quaternary structure, F-type ATPases have 2 components, CF(1) - the catalytic core - and CF(0) - the membrane proton channel. CF(1) has five subunits: alpha(3), beta(3), gamma(1), delta(1), epsilon(1). CF(0) has three main subunits: a(1), b(2) and c(9-12). The alpha and beta chains form an alternating ring which encloses part of the gamma chain. CF(1) is attached to CF(0) by a central stalk formed by the gamma and epsilon chains, while a peripheral stalk is formed by the delta and b chains.

Its subcellular location is the cell inner membrane. It carries out the reaction ATP + H2O + 4 H(+)(in) = ADP + phosphate + 5 H(+)(out). Functionally, produces ATP from ADP in the presence of a proton gradient across the membrane. The catalytic sites are hosted primarily by the beta subunits. The chain is ATP synthase subunit beta from Neisseria meningitidis serogroup C (strain 053442).